The primary structure comprises 201 residues: Ciliary microtubule inner protein 2C (201 aa).

The protein belongs to the CIMIP2 family. As to quaternary structure, microtubule inner protein component of sperm flagellar doublet microtubules.

The protein resides in the cytoplasm. It is found in the cytoskeleton. Its subcellular location is the cilium axoneme. It localises to the flagellum axoneme. Functionally, microtubule inner protein (MIP) part of the dynein-decorated doublet microtubules (DMTs) in cilia axoneme, which is required for motile cilia beating. Binds to the intra-tubulin interfaces. The polypeptide is Ciliary microtubule inner protein 2C (CIMIP2C) (Bos taurus (Bovine)).